The primary structure comprises 391 residues: Nutrient and stress factor 1 (391 aa).

The span at 1 to 27 (MENTTNRNTAGVLTSSNGNFATNSVAA) shows a compositional bias: polar residues. The segment at 1-37 (MENTTNRNTAGVLTSSNGNFATNSVAASTPKRSKSAR) is disordered. C2H2-type zinc fingers lie at residues 41–66 (FKCT…IRKH) and 72–95 (FQCP…ESVH). Residues 91–149 (RESVHAHKNHHSTSSHQRKPSSSSLSSSSSASSSSSASSSTSYSDPYRKTNINSGNMPM) are disordered. Residues 96 to 109 (AHKNHHSTSSHQRK) show a composition bias toward basic residues. Positions 110–134 (PSSSSLSSSSSASSSSSASSSTSYS) are enriched in low complexity. Residues Ser162 and Ser163 each carry the phosphoserine modification. Residues 326–374 (AFSQPPNGNKNNNMSSSKNGGKGGENFKNTDDRNDNNNKKRSETLSESD) form a disordered region. Over residues 332 to 344 (NGNKNNNMSSSKN) the composition is skewed to low complexity. Over residues 353-369 (KNTDDRNDNNNKKRSET) the composition is skewed to basic and acidic residues.

Its subcellular location is the nucleus. In terms of biological role, transcription factor that participates in the transcriptional activation of glucose-repressed genes during exponential growth in non-fermentable carbon conditions. Also involved in salt-stress response. This chain is Nutrient and stress factor 1 (USV1), found in Saccharomyces cerevisiae (strain ATCC 204508 / S288c) (Baker's yeast).